A 179-amino-acid polypeptide reads, in one-letter code: Probable chorismate pyruvate-lyase (179 aa).

Substrate contacts are provided by Arg-82, Leu-120, and Glu-165.

It belongs to the UbiC family.

It localises to the cytoplasm. It carries out the reaction chorismate = 4-hydroxybenzoate + pyruvate. It participates in cofactor biosynthesis; ubiquinone biosynthesis. Its function is as follows. Removes the pyruvyl group from chorismate, with concomitant aromatization of the ring, to provide 4-hydroxybenzoate (4HB) for the ubiquinone pathway. The sequence is that of Probable chorismate pyruvate-lyase from Vibrio vulnificus (strain CMCP6).